The primary structure comprises 156 residues: Transcription elongation factor GreA (156 aa).

Residues 2 to 27 adopt a coiled-coil conformation; sequence EKTFPMTKEGLDKLKAELENLKLVKR.

This sequence belongs to the GreA/GreB family.

Functionally, necessary for efficient RNA polymerase transcription elongation past template-encoded arresting sites. The arresting sites in DNA have the property of trapping a certain fraction of elongating RNA polymerases that pass through, resulting in locked ternary complexes. Cleavage of the nascent transcript by cleavage factors such as GreA or GreB allows the resumption of elongation from the new 3'terminus. GreA releases sequences of 2 to 3 nucleotides. The sequence is that of Transcription elongation factor GreA from Lactococcus lactis subsp. cremoris (strain SK11).